A 496-amino-acid chain; its full sequence is Alanine aminotransferase 1 (496 aa).

A2 carries the post-translational modification N-acetylalanine. Phosphothreonine is present on T22. The residue at position 314 (K314) is an N6-(pyridoxal phosphate)lysine.

This sequence belongs to the class-I pyridoxal-phosphate-dependent aminotransferase family. Alanine aminotransferase subfamily. As to quaternary structure, homodimer. Pyridoxal 5'-phosphate is required as a cofactor. As to expression, liver, kidney, heart, and skeletal muscles. Expressed at moderate levels in the adipose tissue.

It localises to the cytoplasm. It catalyses the reaction L-alanine + 2-oxoglutarate = pyruvate + L-glutamate. It participates in amino-acid degradation; L-alanine degradation via transaminase pathway; pyruvate from L-alanine: step 1/1. Catalyzes the reversible transamination between alanine and 2-oxoglutarate to form pyruvate and glutamate. Participates in cellular nitrogen metabolism and also in liver gluconeogenesis starting with precursors transported from skeletal muscles. This Homo sapiens (Human) protein is Alanine aminotransferase 1 (GPT).